The sequence spans 140 residues: Transcriptional regulator YdaT (140 aa).

In terms of biological role, transcriptional regulator that causes a severe detrimental growth effect and reduces cell viability. When expressed, it alters expression of a variety of bacterial regulons normally controlled by the transcriptional regulatory protein RcsA, resulting in deficient lipopolysaccharide biosynthesis and cell division. YdaT has no effect on Rac prophage excision. Overexpression of ydaST reduces growth and leads to loss of cell viability. May contribute to toxicity and morphological defects. This Escherichia coli (strain K12) protein is Transcriptional regulator YdaT (ydaT).